The sequence spans 87 residues: MKSKISEYTEKEFLEFVKDIYTNNKKKFPTEESHIQAVLEFKKLTEHPSGSDLLYYPNENREDSPAGVVKEVKEWRASKGLPGFKAG.

This sequence belongs to the colicins ColE2/ColE8/ColE9 and pyocins S1/S2 family.

The polypeptide is Pyocin-S2 immunity protein (imm2) (Pseudomonas aeruginosa (strain ATCC 15692 / DSM 22644 / CIP 104116 / JCM 14847 / LMG 12228 / 1C / PRS 101 / PAO1)).